The following is a 227-amino-acid chain: MNNLITENQNLNIKDQICEIEIKNTIVFNKNNINNNNNNNSNSSIKKCLKSSFNESINENNILTFEIQPNGTYKNYFSNEIPNEIQHLIVEEELYKQFIVKINNKRLPIYYQIMLILMILSMILIIPLFFIVFTFSPRLAFGICLTLLFYIAIFILTNGLIEKRIVLILTYFVLYKKKNYKIEEIILNYNSFLINKKIPILFRLIYKENHVVPGFDKISIEVTFINE.

2 helical membrane passes run 113–133 and 141–161; these read IMLI…FIVF and FGIC…NGLI.

The protein resides in the membrane. This is an uncharacterized protein from Dictyostelium discoideum (Social amoeba).